A 180-amino-acid polypeptide reads, in one-letter code: uncharacterized protein (180 aa).

One can recognise an N-acetyltransferase domain in the interval 31–180; the sequence is LLVRTAEWLR…HLFEKEITAE (150 aa).

It belongs to the acetyltransferase family.

This is an uncharacterized protein from Bacillus subtilis (strain 168).